A 107-amino-acid polypeptide reads, in one-letter code: Snaclec VP12 subunit A (107 aa).

2 cysteine pairs are disulfide-bonded: cysteine 4-cysteine 15 and cysteine 32-cysteine 107. Residues 11-107 enclose the C-type lectin domain; sequence YEGNCYKAFD…ECGLAYPFIC (97 aa).

Belongs to the snaclec family. As to quaternary structure, heterodimer of subunits alpha and beta; disulfide-linked. Expressed by the venom gland.

It is found in the secreted. Its function is as follows. Inhibits integrin alpha-2/beta-1- (ITGA2/ITGB1) dependent melanoma metastasis. This chain is Snaclec VP12 subunit A, found in Daboia palaestinae (Palestine viper).